A 622-amino-acid chain; its full sequence is UvrABC system protein C (622 aa).

Residues 13–92 enclose the GIY-YIG domain; that stretch reads DKPGVYLMKN…IKENRPKYNV (80 aa). The UVR domain occupies 205-240; that stretch reads DELIKKIEEKMKRAAEKMDFEGAAHYRDQRQALLDI.

This sequence belongs to the UvrC family. Interacts with UvrB in an incision complex.

It is found in the cytoplasm. In terms of biological role, the UvrABC repair system catalyzes the recognition and processing of DNA lesions. UvrC both incises the 5' and 3' sides of the lesion. The N-terminal half is responsible for the 3' incision and the C-terminal half is responsible for the 5' incision. This is UvrABC system protein C from Alkaliphilus metalliredigens (strain QYMF).